Reading from the N-terminus, the 242-residue chain is Proteasome subunit alpha (242 aa).

Belongs to the peptidase T1A family. As to quaternary structure, the 20S proteasome core is composed of 14 alpha and 14 beta subunits that assemble into four stacked heptameric rings, resulting in a barrel-shaped structure. The two inner rings, each composed of seven catalytic beta subunits, are sandwiched by two outer rings, each composed of seven alpha subunits. The catalytic chamber with the active sites is on the inside of the barrel. Has a gated structure, the ends of the cylinder being occluded by the N-termini of the alpha-subunits. Is capped by the proteasome-associated ATPase, ARC.

It is found in the cytoplasm. It participates in protein degradation; proteasomal Pup-dependent pathway. The formation of the proteasomal ATPase ARC-20S proteasome complex, likely via the docking of the C-termini of ARC into the intersubunit pockets in the alpha-rings, may trigger opening of the gate for substrate entry. Interconversion between the open-gate and close-gate conformations leads to a dynamic regulation of the 20S proteasome proteolysis activity. Its function is as follows. Component of the proteasome core, a large protease complex with broad specificity involved in protein degradation. The sequence is that of Proteasome subunit alpha from Renibacterium salmoninarum (strain ATCC 33209 / DSM 20767 / JCM 11484 / NBRC 15589 / NCIMB 2235).